The following is a 176-amino-acid chain: MSRRILGIDPGSLITGFGVIDVVGNQRHYVASGAIRTKSGSPLAERVKVLVDGIHQVIDTYRPTEAALERVFVNVNPAATLMLGQARGACMTALVLKDLPVAEYTALQVKQSVVGQGKAPKEQVQYMVVRMLNLSGTPQADAADALAVALTHANHSGGAIGKLALRGLKVRGGRLV.

Residues Asp-9, Glu-69, and Asp-141 contribute to the active site. Residues Asp-9, Glu-69, and Asp-141 each coordinate Mg(2+).

It belongs to the RuvC family. In terms of assembly, homodimer which binds Holliday junction (HJ) DNA. The HJ becomes 2-fold symmetrical on binding to RuvC with unstacked arms; it has a different conformation from HJ DNA in complex with RuvA. In the full resolvosome a probable DNA-RuvA(4)-RuvB(12)-RuvC(2) complex forms which resolves the HJ. Requires Mg(2+) as cofactor.

The protein resides in the cytoplasm. It catalyses the reaction Endonucleolytic cleavage at a junction such as a reciprocal single-stranded crossover between two homologous DNA duplexes (Holliday junction).. The RuvA-RuvB-RuvC complex processes Holliday junction (HJ) DNA during genetic recombination and DNA repair. Endonuclease that resolves HJ intermediates. Cleaves cruciform DNA by making single-stranded nicks across the HJ at symmetrical positions within the homologous arms, yielding a 5'-phosphate and a 3'-hydroxyl group; requires a central core of homology in the junction. The consensus cleavage sequence is 5'-(A/T)TT(C/G)-3'. Cleavage occurs on the 3'-side of the TT dinucleotide at the point of strand exchange. HJ branch migration catalyzed by RuvA-RuvB allows RuvC to scan DNA until it finds its consensus sequence, where it cleaves and resolves the cruciform DNA. The protein is Crossover junction endodeoxyribonuclease RuvC of Chromobacterium violaceum (strain ATCC 12472 / DSM 30191 / JCM 1249 / CCUG 213 / NBRC 12614 / NCIMB 9131 / NCTC 9757 / MK).